The primary structure comprises 133 residues: Ribonuclease VapC10 (133 aa).

In terms of domain architecture, PINc spans 2–119; sequence ILVDSDVLIA…NVWHFPMFEQ (118 aa). 2 residues coordinate Mg(2+): aspartate 5 and aspartate 92.

The protein belongs to the PINc/VapC protein family. Mg(2+) is required as a cofactor.

Its function is as follows. Toxic component of a type II toxin-antitoxin (TA) system. An RNase. The cognate antitoxin is VapB10. The protein is Ribonuclease VapC10 of Mycobacterium tuberculosis (strain CDC 1551 / Oshkosh).